Here is a 621-residue protein sequence, read N- to C-terminus: MIQVLLVTICLAVFPYQGSSIILESGNVNDYEVVYPRKVTSLPKGAVQQKYEDAMQYELKVNGEPVVLHLEKNKGLFSKDYSETHYSPDGRKITTKPPVKDHCYYHGHIQNDADSTASISACNGLKGHFKLQGEMYLIEPLKLPDSEAHAVFKYENVEKEDEAPKMCGVTETNWESDEPIKEASQSNLTPEQQSYLNAPKYVKFFLVADHIMYLKYGRNLTTLRTRIFDTVNVVYLILLRINIHVLLVGMEIWSHKDKIIVQSVPAVTLKLFATWREADLLKHKSHGCAHLLTGINFNGPTAGLAYLGAICNPMYSAGIVQDHNKIHHLVAIAMAHELGHNLGINHDKDTCTCRAKACVMAGTISCDASYLFSDCSRQEHREFLIKNMPQCILKKPLKTDVVSPPVCGNYFVEVGEDCDCGSPATCRDSCCNPTNCKLRQGAQCAEGLCCDQCRFKGAGTECRPASSECDMADLCTGRSAECTDRFQRNGQPCQNNNGYCYNGTCPSMTDQCIALFGPNAAVSQDACFQFNREGNHYGYCRKEQNTKIACEPENVKCGRLYCIDSSPANKNPCNIVYLPNDEEKGMVLAGTKCADGRACNSNGQCVGVNGAYKSTTGFSQI.

The N-terminal stretch at 1–20 is a signal peptide; sequence MIQVLLVTICLAVFPYQGSS. The propeptide occupies 21–191; that stretch reads IILESGNVND…EASQSNLTPE (171 aa). Glutamine 192 bears the Pyrrolidone carboxylic acid mark. Positions 200 to 396 constitute a Peptidase M12B domain; that stretch reads KYVKFFLVAD…NMPQCILKKP (197 aa). A glycan (N-linked (GlcNAc...) asparagine) is linked at asparagine 219. Intrachain disulfides connect cysteine 311-cysteine 391, cysteine 351-cysteine 375, and cysteine 353-cysteine 358. Histidine 336 contributes to the Zn(2+) binding site. Glutamate 337 is an active-site residue. Residues histidine 340 and histidine 346 each contribute to the Zn(2+) site. The region spanning 404 to 489 is the Disintegrin domain; sequence PPVCGNYFVE…AECTDRFQRN (86 aa). Valine 406, asparagine 409, phenylalanine 411, glutamate 413, glutamate 416, and aspartate 419 together coordinate Ca(2+). Disulfide bonds link cysteine 407–cysteine 436, cysteine 418–cysteine 431, cysteine 420–cysteine 426, cysteine 430–cysteine 453, cysteine 444–cysteine 450, cysteine 449–cysteine 475, cysteine 462–cysteine 482, cysteine 469–cysteine 500, cysteine 493–cysteine 505, cysteine 512–cysteine 562, cysteine 527–cysteine 573, cysteine 540–cysteine 550, cysteine 557–cysteine 599, and cysteine 593–cysteine 605. Positions 468 to 470 match the D/ECD-tripeptide motif; it reads ECD. Residues aspartate 470, methionine 471, aspartate 473, aspartate 484, and arginine 485 each contribute to the Ca(2+) site. An N-linked (GlcNAc...) asparagine glycan is attached at asparagine 502.

This sequence belongs to the venom metalloproteinase (M12B) family. P-III subfamily. P-IIIc sub-subfamily. As to quaternary structure, homodimer; disulfide-linked. The cofactor is Zn(2+). Post-translationally, the N-terminus is blocked. As to expression, expressed by the venom gland.

It is found in the secreted. Inhibited by EDTA and DTT, and partially inhibited by EGTA, but not inhibited by PMSF and NEM. Its function is as follows. Snake venom zinc metalloprotease that hydrolyzes the alpha-chain (FGA) and more slowly the beta-chain (FGB) of fibrinogen. Inhibits cell proliferation and induces cell morphologic changes transiently on human umbilical vein endothelial cells. The polypeptide is Zinc metalloproteinase-disintegrin-like TSV-DM (Trimeresurus stejnegeri (Chinese green tree viper)).